The sequence spans 223 residues: Small ribosomal subunit protein uS11m (223 aa).

A mitochondrion-targeting transit peptide spans 1–38 (MVLKHSVTYNLSFFISFTFSSIFFSSLILFLVYKSVLS).

This sequence belongs to the universal ribosomal protein uS11 family. In terms of assembly, component of the mitochondrial small ribosomal subunit (mt-SSU). Mature yeast 74S mitochondrial ribosomes consist of a small (37S) and a large (54S) subunit. The 37S small subunit contains a 15S ribosomal RNA (15S mt-rRNA) and at least 32 different proteins. The 54S large subunit contains a 21S rRNA (21S mt-rRNA) and at least 45 different proteins.

It localises to the mitochondrion. Component of the mitochondrial ribosome (mitoribosome), a dedicated translation machinery responsible for the synthesis of mitochondrial genome-encoded proteins, including at least some of the essential transmembrane subunits of the mitochondrial respiratory chain. The mitoribosomes are attached to the mitochondrial inner membrane and translation products are cotranslationally integrated into the membrane. The chain is Small ribosomal subunit protein uS11m (mrps18) from Schizosaccharomyces pombe (strain 972 / ATCC 24843) (Fission yeast).